A 145-amino-acid chain; its full sequence is Cell division protein SepF (145 aa).

The segment covering 23 to 41 (PQEVSKTKDENAKPKHETP) has biased composition (basic and acidic residues). A disordered region spans residues 23-42 (PQEVSKTKDENAKPKHETPK).

The protein belongs to the SepF family. Homodimer. Interacts with FtsZ.

The protein resides in the cytoplasm. Cell division protein that is part of the divisome complex and is recruited early to the Z-ring. Probably stimulates Z-ring formation, perhaps through the cross-linking of FtsZ protofilaments. Its function overlaps with FtsA. The polypeptide is Cell division protein SepF (Caldicellulosiruptor bescii (strain ATCC BAA-1888 / DSM 6725 / KCTC 15123 / Z-1320) (Anaerocellum thermophilum)).